A 94-amino-acid polypeptide reads, in one-letter code: Elongation factor 1-beta (94 aa).

The protein belongs to the EF-1-beta/EF-1-delta family.

In terms of biological role, promotes the exchange of GDP for GTP in EF-1-alpha/GDP, thus allowing the regeneration of EF-1-alpha/GTP that could then be used to form the ternary complex EF-1-alpha/GTP/AAtRNA. The polypeptide is Elongation factor 1-beta (Ignicoccus hospitalis (strain KIN4/I / DSM 18386 / JCM 14125)).